Here is a 54-residue protein sequence, read N- to C-terminus: MMCVCIPKKKLMDWRVYYIYSYVVCLYMCGSDCACICVLACVVQCVCFNVEMRL.

The helical transmembrane segment at 21–43 (SYVVCLYMCGSDCACICVLACVV) threads the bilayer.

It localises to the membrane. This is an uncharacterized protein from Saccharomyces cerevisiae (strain ATCC 204508 / S288c) (Baker's yeast).